Reading from the N-terminus, the 652-residue chain is Pesticidal crystal protein Cry3Bb (652 aa).

Positions 1 to 12 are enriched in basic and acidic residues; that stretch reads MNPNNRSEHDTI. 2 disordered regions span residues 1 to 33 and 433 to 465; these read MNPNNRSEHDTIKVTPNSELQTNHNQYPLADNP and KNETSTQTYDSKRNNGHVSAQDSIDQLPPETTD. The segment covering 14–33 has biased composition (polar residues); sequence VTPNSELQTNHNQYPLADNP.

It belongs to the delta endotoxin family. As to quaternary structure, monomer.

In terms of biological role, promotes colloidosmotic lysis by binding to the midgut epithelial cells of Coleoptera. Has moderate level of toxicity to southern corn rootworm. The sequence is that of Pesticidal crystal protein Cry3Bb (cry3Bb) from Bacillus thuringiensis.